Consider the following 507-residue polypeptide: ATP synthase subunit alpha, chloroplastic (507 aa).

ATP is bound at residue 170–177 (GDRQTGKT).

This sequence belongs to the ATPase alpha/beta chains family. As to quaternary structure, F-type ATPases have 2 components, CF(1) - the catalytic core - and CF(0) - the membrane proton channel. CF(1) has five subunits: alpha(3), beta(3), gamma(1), delta(1), epsilon(1). CF(0) has four main subunits: a, b, b' and c.

The protein resides in the plastid. The protein localises to the chloroplast thylakoid membrane. It carries out the reaction ATP + H2O + 4 H(+)(in) = ADP + phosphate + 5 H(+)(out). Its function is as follows. Produces ATP from ADP in the presence of a proton gradient across the membrane. The alpha chain is a regulatory subunit. This chain is ATP synthase subunit alpha, chloroplastic, found in Liriodendron tulipifera (Tuliptree).